We begin with the raw amino-acid sequence, 224 residues long: Holliday junction branch migration complex subunit RuvA (224 aa).

Positions 1-67 (MISWLKGEKV…EDGTSLYGFI (67 aa)) are domain I. A domain II region spans residues 68–146 (EVNQRDLFRE…RFTDNDKTIH (79 aa)). The interval 147–157 (ENKNDIEANQF) is flexible linker. Residues 157–224 (FSKYIDEIYL…ILMKLSEKST (68 aa)) form a domain III region.

The protein belongs to the RuvA family. In terms of assembly, homotetramer. Forms an RuvA(8)-RuvB(12)-Holliday junction (HJ) complex. HJ DNA is sandwiched between 2 RuvA tetramers; dsDNA enters through RuvA and exits via RuvB. An RuvB hexamer assembles on each DNA strand where it exits the tetramer. Each RuvB hexamer is contacted by two RuvA subunits (via domain III) on 2 adjacent RuvB subunits; this complex drives branch migration. In the full resolvosome a probable DNA-RuvA(4)-RuvB(12)-RuvC(2) complex forms which resolves the HJ.

Its subcellular location is the cytoplasm. Its function is as follows. The RuvA-RuvB-RuvC complex processes Holliday junction (HJ) DNA during genetic recombination and DNA repair, while the RuvA-RuvB complex plays an important role in the rescue of blocked DNA replication forks via replication fork reversal (RFR). RuvA specifically binds to HJ cruciform DNA, conferring on it an open structure. The RuvB hexamer acts as an ATP-dependent pump, pulling dsDNA into and through the RuvAB complex. HJ branch migration allows RuvC to scan DNA until it finds its consensus sequence, where it cleaves and resolves the cruciform DNA. The polypeptide is Holliday junction branch migration complex subunit RuvA (Prochlorococcus marinus (strain NATL2A)).